A 257-amino-acid polypeptide reads, in one-letter code: Small ribosomal subunit protein uS15m (257 aa).

A mitochondrion-targeting transit peptide spans 1-57 (MLRVAWRTLSLIRTRAVTQVLVPGLPGGGSAKFPFNQWGLQPRSLLLQAARGYVVRK). The segment at 225–257 (RALKAAAAAQKQAKRRNPDSPAKAIPKTLKDSQ) is disordered.

Belongs to the universal ribosomal protein uS15 family. In terms of assembly, component of the mitochondrial small ribosomal subunit (mt-SSU). Mature mammalian 55S mitochondrial ribosomes consist of a small (28S) and a large (39S) subunit. The 28S small subunit contains a 12S ribosomal RNA (12S mt-rRNA) and 30 different proteins. The 39S large subunit contains a 16S rRNA (16S mt-rRNA), a copy of mitochondrial valine transfer RNA (mt-tRNA(Val)), which plays an integral structural role, and 52 different proteins. Interacts with METTL17.

The protein localises to the mitochondrion matrix. The protein is Small ribosomal subunit protein uS15m (MRPS15) of Homo sapiens (Human).